Here is a 577-residue protein sequence, read N- to C-terminus: Insulin-like growth factor 2 mRNA-binding protein 1 (577 aa).

2 RRM domains span residues 2 to 75 (NKLY…HSVP) and 81 to 156 (RKIQ…YIPD). Residues S12 and S73 each carry the phosphoserine modification. The interval 156–190 (DEQITQGPENGRRGGFGSRGQPRQGSPVAAGAPAK) is disordered. The residue at position 181 (S181) is a Phosphoserine; by MTOR. 4 KH domains span residues 195 to 260 (DIPL…CKMI), 276 to 343 (EVPL…EQEI), 405 to 470 (QEMV…QGRI), and 487 to 553 (KLET…QRKI). Residues 312–323 (ISSLQDLTLYNP) form a sufficient for nuclear export region. The interval 485-495 (EVKLETHIRVP) is sufficient for nuclear export. T528 is modified (phosphothreonine).

The protein belongs to the RRM IMP/VICKZ family. Can form homodimers and heterodimers with IGF2BP1 and IGF2BP3. Component of the coding region determinant (CRD)-mediated complex, composed of DHX9, HNRNPU, IGF2BP1, SYNCRIP and YBX1. Identified in a mRNP complex, at least composed of DHX9, DDX3X, ELAVL1, HNRNPU, IGF2BP1, ILF3, PABPC1, PCBP2, PTBP2, STAU1, STAU2, SYNCRIP and YBX1. Associates with mRNP complex. Interacts with FMR1. Component of a multisubunit autoregulatory RNP complex (ARC), at least composed of IGF2BP1, PABPC1 and CSDE1. Interacts with AGO1 and AGO2. Interacts, through domains KH3 and KH4, with PABPC1 in an RNA-independent manner. Component of a TAU mRNP complex, at least composed of IGF2BP1, ELAVL4 and G3BP. Interacts with ELAVL4 in an RNA-dependent manner. Associates with microtubules and polysomes. Interacts with ELAVL1 and MATR3. Post-translationally, phosphorylated at Ser-181 by mTORC2 cotranslationally, promoting binding to the 3'-UTR of IGF2 mRNA. Expressed in zygotes and blastocysts (at protein level). Expressed in brain, skeletal muscle, trophoblasts of placenta, oocytes and spermatogonia (at protein level). Expressed in testis and ovary. Following colon injury, expressed in the wound bed mesenchyme during the first phase of repair, probably by colonic mesenchymal stem cells (at protein level).

It localises to the nucleus. The protein resides in the cytoplasm. It is found in the perinuclear region. Its subcellular location is the P-body. The protein localises to the stress granule. It localises to the cell projection. The protein resides in the lamellipodium. It is found in the dendrite. Its subcellular location is the dendritic spine. The protein localises to the growth cone. It localises to the filopodium. The protein resides in the axon. Its function is as follows. RNA-binding factor that recruits target transcripts to cytoplasmic protein-RNA complexes (mRNPs). This transcript 'caging' into mRNPs allows mRNA transport and transient storage. It also modulates the rate and location at which target transcripts encounter the translational apparatus and shields them from endonuclease attacks or microRNA-mediated degradation. Preferentially binds to N6-methyladenosine (m6A)-containing mRNAs and increases their stability. Regulates localized beta-actin/ACTB mRNA translation, a crucial process for cell polarity, cell migration and neurite outgrowth. Co-transcriptionally associates with the ACTB mRNA in the nucleus. This binding involves a conserved 54-nucleotide element in the ACTB mRNA 3'-UTR, known as the 'zipcode'. The RNP thus formed is exported to the cytoplasm, binds to a motor protein and is transported along the cytoskeleton to the cell periphery. During transport, prevents ACTB mRNA from being translated into protein. When the RNP complex reaches its destination near the plasma membrane, IGF2BP1 is phosphorylated. This releases the mRNA, allowing ribosomal 40S and 60S subunits to assemble and initiate ACTB protein synthesis. Monomeric ACTB then assembles into the subcortical actin cytoskeleton. During neuronal development, key regulator of neurite outgrowth, growth cone guidance and neuronal cell migration, presumably through the spatiotemporal fine tuning of protein synthesis, such as that of ACTB. May regulate mRNA transport to activated synapses. Binds to the 3'-UTR of CD44 mRNA and stabilizes it, hence promotes cell adhesion and invadopodia formation in cancer cells. Binds to the oncofetal H19 transcript and regulates its localization. Binds to and stabilizes BTRC/FBW1A mRNA. Binds to the adenine-rich autoregulatory sequence (ARS) located in PABPC1 mRNA and represses its translation. PABPC1 mRNA-binding is stimulated by PABPC1 protein. Prevents BTRC/FBW1A mRNA degradation by disrupting microRNA-dependent interaction with AGO2. During cellular stress, such as oxidative stress or heat shock, stabilizes target mRNAs that are recruited to stress granules, including CD44, IGF2, MAPK4, MYC, PTEN, RAPGEF2 and RPS6KA5 transcripts. Interacts with GAP43 transcript and transports it to axons. Binds to the 3'-UTR of IGF2 mRNA by a mechanism of cooperative and sequential dimerization and regulates IGF2 mRNA subcellular localization and translation. Binds to MYC mRNA, in the coding region instability determinant (CRD) of the open reading frame (ORF), hence prevents MYC cleavage by endonucleases and possibly microRNA targeting to MYC-CRD. Binding to MYC mRNA is enhanced by m6A-modification of the CRD. Binds to and stabilizes ABCB1/MDR-1 mRNA. Binds to the neuron-specific TAU mRNA and regulates its localization. Plays a direct role in the transport and translation of transcripts required for axonal regeneration in adult sensory neurons. During interstinal wound repair, interacts with and stabilizes PTGS2 transcript. PTGS2 mRNA stabilization may be crucial for colonic mucosal wound healing. The chain is Insulin-like growth factor 2 mRNA-binding protein 1 (Igf2bp1) from Mus musculus (Mouse).